A 37-amino-acid chain; its full sequence is Antifungal protein 4 (37 aa).

Its subcellular location is the secreted. In terms of biological role, possesses antifungal activity against P.infestans but not F.graminearum. The protein is Antifungal protein 4 of Malva parviflora (Little mallow).